The following is a 96-amino-acid chain: UPF0251 protein Shal_3723 (96 aa).

The protein belongs to the UPF0251 family.

This chain is UPF0251 protein Shal_3723, found in Shewanella halifaxensis (strain HAW-EB4).